The chain runs to 202 residues: Translation initiation factor 2 subunit beta (202 aa).

The TRAM domain occupies 145-202; sequence AIEEGGTYELRIDAVGSKGDGIAKIDKYTVFVPGATKGDVVKVKIKKISGNLAFSERA.

This sequence belongs to the eIF-2-beta/eIF-5 family. In terms of assembly, heterotrimer composed of an alpha, a beta and a gamma chain.

EIF-2 functions in the early steps of protein synthesis by forming a ternary complex with GTP and initiator tRNA. The sequence is that of Translation initiation factor 2 subunit beta (eif2b) from Methanosarcina mazei (strain ATCC BAA-159 / DSM 3647 / Goe1 / Go1 / JCM 11833 / OCM 88) (Methanosarcina frisia).